Reading from the N-terminus, the 872-residue chain is Alanine--tRNA ligase (872 aa).

Positions 566, 570, 668, and 672 each coordinate Zn(2+).

It belongs to the class-II aminoacyl-tRNA synthetase family. Requires Zn(2+) as cofactor.

Its subcellular location is the cytoplasm. The enzyme catalyses tRNA(Ala) + L-alanine + ATP = L-alanyl-tRNA(Ala) + AMP + diphosphate. Functionally, catalyzes the attachment of alanine to tRNA(Ala) in a two-step reaction: alanine is first activated by ATP to form Ala-AMP and then transferred to the acceptor end of tRNA(Ala). Also edits incorrectly charged Ser-tRNA(Ala) and Gly-tRNA(Ala) via its editing domain. The chain is Alanine--tRNA ligase from Lactococcus lactis subsp. lactis (strain IL1403) (Streptococcus lactis).